The sequence spans 946 residues: Bifunctional glutamine synthetase adenylyltransferase/adenylyl-removing enzyme (946 aa).

Positions 1 to 440 (MKPLSSPLQQ…VFNELIGDDE (440 aa)) are adenylyl removase. The interval 449–946 (SEQWRELWQD…ASWQKWLVEE (498 aa)) is adenylyl transferase.

The protein belongs to the GlnE family. The cofactor is Mg(2+).

It catalyses the reaction [glutamine synthetase]-O(4)-(5'-adenylyl)-L-tyrosine + phosphate = [glutamine synthetase]-L-tyrosine + ADP. The catalysed reaction is [glutamine synthetase]-L-tyrosine + ATP = [glutamine synthetase]-O(4)-(5'-adenylyl)-L-tyrosine + diphosphate. In terms of biological role, involved in the regulation of glutamine synthetase GlnA, a key enzyme in the process to assimilate ammonia. When cellular nitrogen levels are high, the C-terminal adenylyl transferase (AT) inactivates GlnA by covalent transfer of an adenylyl group from ATP to specific tyrosine residue of GlnA, thus reducing its activity. Conversely, when nitrogen levels are low, the N-terminal adenylyl removase (AR) activates GlnA by removing the adenylyl group by phosphorolysis, increasing its activity. The regulatory region of GlnE binds the signal transduction protein PII (GlnB) which indicates the nitrogen status of the cell. The polypeptide is Bifunctional glutamine synthetase adenylyltransferase/adenylyl-removing enzyme (Escherichia coli O81 (strain ED1a)).